Reading from the N-terminus, the 395-residue chain is MGKLENASWIHDPLMKYLNSTEEYLAHLCGPKRSDLSLPVSVAYALIFLVGVMGNLLVCMVIVRHQTLKTPTNYYLFSLAVSDLLVLLLGMPLEIYEMWHNYPFLFGPVGCYFKTALFETVCFASILSVTTVSVERYVAIVHPFRAKLESTRRRALRILSLVWSFSVVFSLPNTSIHGIKFQHFPNGSSVPGSATCTVTKPMWVYNLIIQATSFLFYILPMTLISVLYYLMGLRLKRDESLEANKVAVNIHRPSRKSVTKMLFVLVLVFAICWTPFHVDRLFFSFVEEWTESLAAVFNLIHVVSGVFFYLSSAVNPIIYNLLSRRFRAAFRNVVSPTCKWCHPRHRPQGPPAQKIIFLTECHLVELTEDAGPQFPGQSSIHNTNLTTAPCAGEVP.

The Extracellular portion of the chain corresponds to 1 to 41 (MGKLENASWIHDPLMKYLNSTEEYLAHLCGPKRSDLSLPVS). N-linked (GlcNAc...) asparagine glycosylation is found at N6 and N19. The chain crosses the membrane as a helical span at residues 42 to 62 (VAYALIFLVGVMGNLLVCMVI). Over 63–74 (VRHQTLKTPTNY) the chain is Cytoplasmic. A helical transmembrane segment spans residues 75–95 (YLFSLAVSDLLVLLLGMPLEI). The Extracellular segment spans residues 96-115 (YEMWHNYPFLFGPVGCYFKT). A disulfide bridge connects residues C111 and C196. Residues 116-138 (ALFETVCFASILSVTTVSVERYV) traverse the membrane as a helical segment. Over 139–157 (AIVHPFRAKLESTRRRALR) the chain is Cytoplasmic. Residues 158–178 (ILSLVWSFSVVFSLPNTSIHG) traverse the membrane as a helical segment. Residues 179 to 212 (IKFQHFPNGSSVPGSATCTVTKPMWVYNLIIQAT) are Extracellular-facing. N186 is a glycosylation site (N-linked (GlcNAc...) asparagine). The chain crosses the membrane as a helical span at residues 213 to 233 (SFLFYILPMTLISVLYYLMGL). Residues 234–257 (RLKRDESLEANKVAVNIHRPSRKS) are Cytoplasmic-facing. Residues 258–278 (VTKMLFVLVLVFAICWTPFHV) form a helical membrane-spanning segment. Topologically, residues 279 to 293 (DRLFFSFVEEWTESL) are extracellular. A helical membrane pass occupies residues 294 to 314 (AAVFNLIHVVSGVFFYLSSAV). At 315–395 (NPIIYNLLSR…TTAPCAGEVP (81 aa)) the chain is on the cytoplasmic side. The tract at residues 374–395 (FPGQSSIHNTNLTTAPCAGEVP) is disordered. The segment covering 375–387 (PGQSSIHNTNLTT) has biased composition (polar residues).

The protein belongs to the G-protein coupled receptor 1 family. As to expression, the highest level is detected in the uterus. In the central nervous system, high expression levels were found in the hypothalamus and moderate levels in both the medulla oblongata and spinal cord. Expressed in the hypothalamic paraventricular nucleus (PVN) and suprachiasmatic nuclei (SCN) of the hypothalamus. Expression is low in the gastrointestinal tract. In other peripheral tissues, moderate expression was observed in the lung and ovary.

It is found in the cell membrane. In terms of biological role, receptor for the neuromedin-U and neuromedin-S neuropeptides. The chain is Neuromedin-U receptor 2 (Nmur2) from Rattus norvegicus (Rat).